A 493-amino-acid polypeptide reads, in one-letter code: Glycerol kinase 2 (493 aa).

Position 12 (Ser-12) interacts with ADP. ATP-binding residues include Ser-12 and Thr-13. Ser-12 provides a ligand contact to sn-glycerol 3-phosphate. Lys-16 contributes to the ADP binding site. Sn-glycerol 3-phosphate is bound by residues Arg-82, Glu-83, Tyr-134, and Asp-243. Positions 82, 83, 134, 243, and 244 each coordinate glycerol. Residues Thr-265 and Gly-308 each contribute to the ADP site. 3 residues coordinate ATP: Thr-265, Gly-308, and Asn-312. Asn-413 is a binding site for ADP.

Belongs to the FGGY kinase family. As to quaternary structure, homotetramer and homodimer (in equilibrium).

The enzyme catalyses glycerol + ATP = sn-glycerol 3-phosphate + ADP + H(+). It functions in the pathway polyol metabolism; glycerol degradation via glycerol kinase pathway; sn-glycerol 3-phosphate from glycerol: step 1/1. With respect to regulation, activated by phosphorylation and inhibited by fructose 1,6-bisphosphate (FBP). In terms of biological role, key enzyme in the regulation of glycerol uptake and metabolism. Catalyzes the phosphorylation of glycerol to yield sn-glycerol 3-phosphate. This chain is Glycerol kinase 2, found in Clostridium tetani (strain Massachusetts / E88).